We begin with the raw amino-acid sequence, 257 residues long: uncharacterized protein (257 aa).

This is an uncharacterized protein from Acidianus bottle-shaped virus (isolate Italy/Pozzuoli) (ABV).